A 188-amino-acid polypeptide reads, in one-letter code: Protein crossbronx-like (188 aa).

The region spanning Lys-15–Gly-174 is the UBC core domain.

This sequence belongs to the ubiquitin-conjugating enzyme family. FTS subfamily.

The chain is Protein crossbronx-like from Drosophila simulans (Fruit fly).